The following is a 338-amino-acid chain: Anthranilate phosphoribosyltransferase (338 aa).

5-phospho-alpha-D-ribose 1-diphosphate-binding positions include G81, G84–D85, S89, N91–T94, K109–S117, and A121. G81 contributes to the anthranilate binding site. Position 93 (S93) interacts with Mg(2+). Anthranilate is bound at residue N112. R167 is a binding site for anthranilate. The Mg(2+) site is built by D226 and E227.

This sequence belongs to the anthranilate phosphoribosyltransferase family. In terms of assembly, homodimer. Mg(2+) serves as cofactor.

The catalysed reaction is N-(5-phospho-beta-D-ribosyl)anthranilate + diphosphate = 5-phospho-alpha-D-ribose 1-diphosphate + anthranilate. It functions in the pathway amino-acid biosynthesis; L-tryptophan biosynthesis; L-tryptophan from chorismate: step 2/5. Functionally, catalyzes the transfer of the phosphoribosyl group of 5-phosphorylribose-1-pyrophosphate (PRPP) to anthranilate to yield N-(5'-phosphoribosyl)-anthranilate (PRA). In Rhodopseudomonas palustris (strain HaA2), this protein is Anthranilate phosphoribosyltransferase.